Here is a 312-residue protein sequence, read N- to C-terminus: Probable deoxyhypusine synthase (312 aa).

Residue lysine 285 is the Nucleophile of the active site.

Belongs to the deoxyhypusine synthase family. NAD(+) is required as a cofactor.

It catalyses the reaction [eIF5A protein]-L-lysine + spermidine = [eIF5A protein]-deoxyhypusine + propane-1,3-diamine. Its pathway is protein modification; eIF5A hypusination. In terms of biological role, catalyzes the NAD-dependent oxidative cleavage of spermidine and the subsequent transfer of the butylamine moiety of spermidine to the epsilon-amino group of a specific lysine residue of the eIF-5A precursor protein to form the intermediate deoxyhypusine residue. The chain is Probable deoxyhypusine synthase (dys) from Saccharolobus solfataricus (strain ATCC 35092 / DSM 1617 / JCM 11322 / P2) (Sulfolobus solfataricus).